The primary structure comprises 174 residues: Large ribosomal subunit protein uL10 (174 aa).

The protein belongs to the universal ribosomal protein uL10 family. In terms of assembly, part of the ribosomal stalk of the 50S ribosomal subunit. The N-terminus interacts with L11 and the large rRNA to form the base of the stalk. The C-terminus forms an elongated spine to which L12 dimers bind in a sequential fashion forming a multimeric L10(L12)X complex.

In terms of biological role, forms part of the ribosomal stalk, playing a central role in the interaction of the ribosome with GTP-bound translation factors. This Bordetella bronchiseptica (strain ATCC BAA-588 / NCTC 13252 / RB50) (Alcaligenes bronchisepticus) protein is Large ribosomal subunit protein uL10.